Here is a 139-residue protein sequence, read N- to C-terminus: U6 snRNA-associated Sm-like protein LSm4 (139 aa).

M1 is modified (N-acetylmethionine). In terms of domain architecture, Sm spans 2 to 75; the sequence is LPLSLLKTAQ…IKYLRIPDEI (74 aa). K80 participates in a covalent cross-link: Glycyl lysine isopeptide (Lys-Gly) (interchain with G-Cter in SUMO2). The tract at residues 87–139 is disordered; the sequence is GRGRGGLQQQKQQKGRGMGGAGRGVFGGRGRGGIPGTGRGQPEKKPGRQAGKQ. Residues 102 to 125 are compositionally biased toward gly residues; the sequence is RGMGGAGRGVFGGRGRGGIPGTGR.

It belongs to the snRNP Sm proteins family. In terms of assembly, component of the precatalytic spliceosome (spliceosome B complex). Component of the U4/U6-U5 tri-snRNP complex, a building block of the precatalytic spliceosome (spliceosome B complex). The U4/U6-U5 tri-snRNP complex is composed of the U4, U6 and U5 snRNAs and at least PRPF3, PRPF4, PRPF6, PRPF8, PRPF31, SNRNP200, TXNL4A, SNRNP40, SNRPB, SNRPD1, SNRPD2, SNRPD3, SNRPE, SNRPF, SNRPG, DDX23, CD2BP2, PPIH, SNU13, EFTUD2, SART1 and USP39, plus LSM2, LSM3, LSM4, LSM5, LSM6, LSM7 and LSM8. LSM2, LSM3, LSM4, LSM5, LSM6, LSM7 and LSM8 form a heptameric, ring-shaped subcomplex (the LSM2-8 complex) that is part of the U4/U6-U5 tri-snRNP complex and the precatalytic spliceosome.

It is found in the nucleus. In terms of biological role, plays a role in pre-mRNA splicing as component of the U4/U6-U5 tri-snRNP complex that is involved in spliceosome assembly, and as component of the precatalytic spliceosome (spliceosome B complex). The heptameric LSM2-8 complex binds specifically to the 3'-terminal U-tract of U6 snRNA. This Bos taurus (Bovine) protein is U6 snRNA-associated Sm-like protein LSm4 (LSM4).